The sequence spans 150 residues: uncharacterized protein (150 aa).

In terms of domain architecture, HTH marR-type spans 1 to 133; the sequence is MNDILREIGM…ISALLHRVRK (133 aa). The H-T-H motif DNA-binding region spans 47-70; the sequence is QEKLAEMIKVDRTTAARAIKKLEM.

This is an uncharacterized protein from Bacillus subtilis (strain 168).